The chain runs to 1013 residues: NHS-like protein 3 (1013 aa).

Lys17 bears the Phosphoserine mark. Positions 20–195 are disordered; the sequence is SAKAESDNRQ…PPGSRDAVRI (176 aa). The segment covering 73–89 has biased composition (basic and acidic residues); sequence QHQERQKLSKGGWDHGD. Polar residues-rich tracts occupy residues 90-99 and 106-120; these read TQSIQSSQTG and SIYS…SSTA. Ser92 carries the phosphoserine modification. Position 108 is a phosphotyrosine (Tyr108). Ser136, Ser143, and Ser159 each carry phosphoserine. Thr160 is modified (phosphothreonine). A compositionally biased stretch (basic and acidic residues) spans 168–178; it reads VQKELGLRNNR. A Phosphoserine modification is found at Ser213. Arg318 is subject to Asymmetric dimethylarginine. Phosphoserine occurs at positions 320, 325, 328, 336, 337, 339, and 340. Residues 330–1013 are disordered; the sequence is RSLGRFSSAS…PGSDPQKKLV (684 aa). The segment covering 336–361 has biased composition (low complexity); sequence SSASSPRPRSRNASSSSDNWSHSQSS. Positions 362–375 are enriched in polar residues; that stretch reads ETIVSDGSTLSSKG. 3 positions are modified to phosphoserine: Ser398, Ser402, and Ser407. Positions 408 to 427 are enriched in polar residues; that stretch reads TAETSDTASIRSSGQLSGRS. Low complexity-rich tracts occupy residues 484 to 493 and 515 to 530; these read VGAVSCPPSS and RTLS…SGTP. Phosphothreonine is present on Thr529. Ser543 carries the phosphoserine modification. The segment covering 564–577 has biased composition (low complexity); that stretch reads SVSSSLTSLCSSSS. Thr591 carries the phosphothreonine modification. Residues 600 to 614 show a composition bias toward pro residues; sequence PPHPKVPAPFSPPPS. At Ser610 the chain carries Phosphoserine. Residues 615-633 show a composition bias toward low complexity; that stretch reads KSKSSNQAAPVLAAPAVAP. The span at 635 to 657 shows a compositional bias: polar residues; that stretch reads QVSTIDTSPASPSMPQTTLTPAQ. Phosphoserine occurs at positions 667 and 671. Composition is skewed to pro residues over residues 668-683 and 706-716; these read PPPS…PPPT and PSWPPPPPPAP. Over residues 779–795 the composition is skewed to basic and acidic residues; sequence PQKDSVGKHSGAPREDS. Positions 814 to 829 are enriched in polar residues; it reads GASTGIPNPSPGSSAP. Ser838, Ser842, and Ser848 each carry phosphoserine. The span at 859 to 873 shows a compositional bias: low complexity; the sequence is ASSLAASESPASALP. Ser909, Ser952, and Ser959 each carry phosphoserine. Positions 942 to 961 are enriched in pro residues; the sequence is KAPPPVARKPSVGVPPPSPS. Residues 964-975 show a composition bias toward polar residues; sequence RTESLTAPSTNG.

Its function is as follows. Able to directly activate the TNF-NFkappaB signaling pathway. The protein is NHS-like protein 3 (Nhsl3) of Mus musculus (Mouse).